A 249-amino-acid chain; its full sequence is Transmembrane protein 150C (249 aa).

The Cytoplasmic segment spans residues 1–9 (MDGKKCSVW). The chain crosses the membrane as a helical span at residues 10–30 (MFLPLVFTVFTSAGLWIVYFI). Over 31 to 64 (AVEDDKIFPLNSAERKPGVKHAPYISIAGDEPPA) the chain is Extracellular. Residues 65–85 (SCVFSQVMNMAAFLALVVAVL) traverse the membrane as a helical segment. The Cytoplasmic segment spans residues 86–97 (RFIQLKPKVLNP). Residues 98–118 (WLNISGLVALCLASFGMTLLG) form a helical membrane-spanning segment. The Extracellular portion of the chain corresponds to 119 to 130 (NFQLTNDEEIHN). A helical transmembrane segment spans residues 131–151 (VGTSLTFGFGTLTCWIQAALT). Residues 152–168 (LKVNIKNEGRKVGIPRV) lie on the Cytoplasmic side of the membrane. The chain crosses the membrane as a helical span at residues 169–189 (ILSASITLCVVLYFILMAQGI). At 190–192 (HMY) the chain is on the extracellular side. The chain crosses the membrane as a helical span at residues 193–213 (AARVQWGLVMCFLSYFGTFAV). Topologically, residues 214–249 (EFRHYRYEIVCSEYQENFLSFSESLSEASEYQTDQV) are cytoplasmic.

This sequence belongs to the DRAM/TMEM150 family.

The protein localises to the cell membrane. It is found in the lysosome membrane. It catalyses the reaction Ca(2+)(in) = Ca(2+)(out). The enzyme catalyses Na(+)(in) = Na(+)(out). It carries out the reaction K(+)(in) = K(+)(out). The catalysed reaction is Mg(2+)(in) = Mg(2+)(out). In terms of biological role, nonselective cationic channel with high permeability to Ca(2+). Component of a mechanosensitive cation channel. Confers mechanically activated (MA) currents with slow inactivation kinetics. May contribute to proprioception. The sequence is that of Transmembrane protein 150C (TMEM150C) from Bos taurus (Bovine).